Reading from the N-terminus, the 239-residue chain is Lactate utilization protein A (239 aa).

This sequence belongs to the LutA/YkgE family.

Is involved in L-lactate degradation and allows cells to grow with lactate as the sole carbon source. The sequence is that of Lactate utilization protein A from Geobacillus kaustophilus (strain HTA426).